The following is a 127-amino-acid chain: Modulator protein MzrA (127 aa).

The Cytoplasmic segment spans residues 1 to 10 (MLKPRITARQ). Residues 11–31 (LIWISAFLLMLTILMMTWSTL) form a helical membrane-spanning segment. The Periplasmic segment spans residues 32 to 127 (RQQESTLAIR…RLRESSHRFG (96 aa)).

It belongs to the MzrA family. In terms of assembly, interacts with EnvZ.

Its subcellular location is the cell inner membrane. Its function is as follows. Modulates the activity of the EnvZ/OmpR two-component regulatory system, probably by directly modulating EnvZ enzymatic activity and increasing stability of phosphorylated OmpR. This is Modulator protein MzrA from Salmonella agona (strain SL483).